A 281-amino-acid polypeptide reads, in one-letter code: 2-C-methyl-D-erythritol 4-phosphate cytidylyltransferase (281 aa).

The protein belongs to the IspD/TarI cytidylyltransferase family. IspD subfamily.

The catalysed reaction is 2-C-methyl-D-erythritol 4-phosphate + CTP + H(+) = 4-CDP-2-C-methyl-D-erythritol + diphosphate. Its pathway is isoprenoid biosynthesis; isopentenyl diphosphate biosynthesis via DXP pathway; isopentenyl diphosphate from 1-deoxy-D-xylulose 5-phosphate: step 2/6. In terms of biological role, catalyzes the formation of 4-diphosphocytidyl-2-C-methyl-D-erythritol from CTP and 2-C-methyl-D-erythritol 4-phosphate (MEP). This is 2-C-methyl-D-erythritol 4-phosphate cytidylyltransferase from Psychrobacter arcticus (strain DSM 17307 / VKM B-2377 / 273-4).